A 637-amino-acid polypeptide reads, in one-letter code: Phosphomethylpyrimidine synthase (637 aa).

Substrate contacts are provided by residues Asn242, Met271, Tyr300, His336, 356 to 358 (SRG), 397 to 400 (DGLR), and Glu436. Zn(2+) is bound at residue His440. Position 463 (Tyr463) interacts with substrate. His504 lines the Zn(2+) pocket. [4Fe-4S] cluster contacts are provided by Cys584, Cys587, and Cys592.

This sequence belongs to the ThiC family. Homodimer. [4Fe-4S] cluster is required as a cofactor.

The enzyme catalyses 5-amino-1-(5-phospho-beta-D-ribosyl)imidazole + S-adenosyl-L-methionine = 4-amino-2-methyl-5-(phosphooxymethyl)pyrimidine + CO + 5'-deoxyadenosine + formate + L-methionine + 3 H(+). It participates in cofactor biosynthesis; thiamine diphosphate biosynthesis. In terms of biological role, catalyzes the synthesis of the hydroxymethylpyrimidine phosphate (HMP-P) moiety of thiamine from aminoimidazole ribotide (AIR) in a radical S-adenosyl-L-methionine (SAM)-dependent reaction. In Bordetella avium (strain 197N), this protein is Phosphomethylpyrimidine synthase.